The chain runs to 206 residues: Transcription factor MYB57 (206 aa).

Basic residues predominate over residues Met1 to Val11. The interval Met1 to Glu20 is disordered. HTH myb-type domains are found at residues Glu22 to Leu74 and Arg75 to Met129. DNA-binding regions (H-T-H motif) lie at residues Trp50–Leu74 and Trp102–Ile125. The segment at Asn138–Ile162 is disordered. A compositionally biased stretch (low complexity) spans Ser144–Gly159.

Expressed specifically in flowers.

It is found in the nucleus. Functionally, transcription factor acting redundantly with MYB21 and MYB24 to control stamen filament elongation in the late developed flowers. Repressed at the transcript levels by DELLA proteins. The sequence is that of Transcription factor MYB57 (MYB57) from Arabidopsis thaliana (Mouse-ear cress).